Reading from the N-terminus, the 599-residue chain is Riboflavin biosynthesis protein PYRR, chloroplastic (599 aa).

A chloroplast-targeting transit peptide spans 1-17 (MALSFRISSSSPLICRA). The region spanning 30 to 152 (TTDAAFIRRA…ELRSHGIEVN (123 aa)) is the CMP/dCMP-type deaminase domain.

It in the C-terminal section; belongs to the YbiA family.

The protein resides in the plastid. The protein localises to the chloroplast. It catalyses the reaction 5-amino-6-(5-phospho-D-ribitylamino)uracil + NADP(+) = 5-amino-6-(5-phospho-D-ribosylamino)uracil + NADPH + H(+). The enzyme catalyses 2,5-diamino-6-hydroxy-4-(5-phosphoribosylamino)-pyrimidine + H2O = 2,5,6-triamino-4-hydroxypyrimidine + D-ribose 5-phosphate. It carries out the reaction 5-amino-6-(5-phospho-D-ribosylamino)uracil + H2O = 5,6-diaminouracil + D-ribose 5-phosphate. It participates in cofactor biosynthesis; riboflavin biosynthesis; 5-amino-6-(D-ribitylamino)uracil from GTP: step 3/4. Its function is as follows. Pyrimidine reductase involved in the riboflavin biosynthesis pathway. Also has a non-functional N-terminal deaminase domain that lacks the catalytically essential zinc-binding residues. In terms of biological role, catalyzes the hydrolysis of the N-glycosidic bond in the first two intermediates of riboflavin biosynthesis, which are highly reactive metabolites, yielding relatively innocuous products. Thus, can divert a surplus of harmful intermediates into relatively harmless products and pre-empt the damage these intermediates would otherwise do. Helps maintain flavin levels. Has no activity against GTP, nucleoside monophosphates or ADP-ribose. The sequence is that of Riboflavin biosynthesis protein PYRR, chloroplastic (PYRR) from Arabidopsis thaliana (Mouse-ear cress).